Here is a 145-residue protein sequence, read N- to C-terminus: Large ribosomal subunit protein uL15 (145 aa).

The tract at residues Met1–His58 is disordered. 2 stretches are compositionally biased toward gly residues: residues Arg21–Ser31 and Ser42–Gly52.

Belongs to the universal ribosomal protein uL15 family. In terms of assembly, part of the 50S ribosomal subunit.

Functionally, binds to the 23S rRNA. The chain is Large ribosomal subunit protein uL15 from Desulforapulum autotrophicum (strain ATCC 43914 / DSM 3382 / VKM B-1955 / HRM2) (Desulfobacterium autotrophicum).